Here is a 385-residue protein sequence, read N- to C-terminus: MSDFIFCYDSFVKGYLCEYIKEVNKKYRFYLTKKSYIKIIFKYISDLKYLVVNFNDSIKFMKFIVKKDIHCDLKYHGHYKCQSLKNYATYFKYIVQNKCLENIRVFFGRFIPVVKLQSGISRVIDESPKKLFGNIVIDIEIIKTIFKYGPLSETESIIEYMLQTTPNLTDEFANDIIAIYKRKIIKYLDTNNDDNTHINEKFHFPNFLIMAYKNDDVYLFNFINDDFFQIVDDLNNIDKTKLNKKQLRTLELFNYKYKLNNQSINSIILPNLIRNDYVKLVKYFCPKIFKELITGFGNFSLLNELILENILIYNNLEYMEIICECIEHTNPELVNKLLPSSRSVEMAQLLIDHGADYEAFYYSNTFILSNISVKKHVAKLVREIL.

Belongs to the mimivirus L17x/L18x family.

This is an uncharacterized protein from Acanthamoeba polyphaga mimivirus (APMV).